We begin with the raw amino-acid sequence, 707 residues long: DNA ligase (707 aa).

NAD(+)-binding positions include 48 to 52, 97 to 98, and glutamate 134; these read DAEYD and SI. Catalysis depends on lysine 136, which acts as the N6-AMP-lysine intermediate. Residues arginine 157, glutamate 193, lysine 320, and lysine 344 each coordinate NAD(+). Zn(2+)-binding residues include cysteine 438, cysteine 441, cysteine 456, and cysteine 462. Residues 621 to 707 form the BRCT domain; that stretch reads VAPKPLSGKT…DSPPDERIPA (87 aa).

The protein belongs to the NAD-dependent DNA ligase family. LigA subfamily. Requires Mg(2+) as cofactor. It depends on Mn(2+) as a cofactor.

It carries out the reaction NAD(+) + (deoxyribonucleotide)n-3'-hydroxyl + 5'-phospho-(deoxyribonucleotide)m = (deoxyribonucleotide)n+m + AMP + beta-nicotinamide D-nucleotide.. DNA ligase that catalyzes the formation of phosphodiester linkages between 5'-phosphoryl and 3'-hydroxyl groups in double-stranded DNA using NAD as a coenzyme and as the energy source for the reaction. It is essential for DNA replication and repair of damaged DNA. In Polaromonas naphthalenivorans (strain CJ2), this protein is DNA ligase.